A 121-amino-acid chain; its full sequence is UPF0102 protein BDI_2565 (121 aa).

This sequence belongs to the UPF0102 family.

This Parabacteroides distasonis (strain ATCC 8503 / DSM 20701 / CIP 104284 / JCM 5825 / NCTC 11152) protein is UPF0102 protein BDI_2565.